A 277-amino-acid chain; its full sequence is Shikimate dehydrogenase (NADP(+)) (277 aa).

Residues 15 to 17 and Thr62 each bind shikimate; that span reads SKS. The active-site Proton acceptor is the Lys66. An NADP(+)-binding site is contributed by Glu78. Positions 87 and 103 each coordinate shikimate. Residues 127–131, 151–156, and Gly238 contribute to the NADP(+) site; these read GAGGA and NRTHEK.

Belongs to the shikimate dehydrogenase family. As to quaternary structure, homodimer.

The catalysed reaction is shikimate + NADP(+) = 3-dehydroshikimate + NADPH + H(+). It functions in the pathway metabolic intermediate biosynthesis; chorismate biosynthesis; chorismate from D-erythrose 4-phosphate and phosphoenolpyruvate: step 4/7. In terms of biological role, involved in the biosynthesis of the chorismate, which leads to the biosynthesis of aromatic amino acids. Catalyzes the reversible NADPH linked reduction of 3-dehydroshikimate (DHSA) to yield shikimate (SA). This chain is Shikimate dehydrogenase (NADP(+)), found in Shewanella frigidimarina (strain NCIMB 400).